The sequence spans 460 residues: Bifunctional protein GlmU (460 aa).

The interval 1–230 is pyrophosphorylase; sequence MSNNYAIILA…FDESLGVNDR (230 aa). UDP-N-acetyl-alpha-D-glucosamine-binding positions include 9 to 12, Lys23, Gln73, and 78 to 79; these read LAAG and GT. Mg(2+) is bound at residue Asp103. UDP-N-acetyl-alpha-D-glucosamine is bound by residues Gly140, Glu155, Asn170, and Asn228. Residue Asn228 coordinates Mg(2+). Positions 231–251 are linker; it reads VALATAEAVMRKRINEKHMVN. The N-acetyltransferase stretch occupies residues 252-460; sequence GVTFINPDAT…TRFPFHPSQK (209 aa). Residues Arg333 and Lys351 each coordinate UDP-N-acetyl-alpha-D-glucosamine. Catalysis depends on His363, which acts as the Proton acceptor. 2 residues coordinate UDP-N-acetyl-alpha-D-glucosamine: Tyr366 and Asn377. Acetyl-CoA-binding positions include Ala380, 386–387, Ser405, Ala423, and Arg440; that span reads NY.

It in the N-terminal section; belongs to the N-acetylglucosamine-1-phosphate uridyltransferase family. This sequence in the C-terminal section; belongs to the transferase hexapeptide repeat family. Homotrimer. Requires Mg(2+) as cofactor.

The protein resides in the cytoplasm. It catalyses the reaction alpha-D-glucosamine 1-phosphate + acetyl-CoA = N-acetyl-alpha-D-glucosamine 1-phosphate + CoA + H(+). The enzyme catalyses N-acetyl-alpha-D-glucosamine 1-phosphate + UTP + H(+) = UDP-N-acetyl-alpha-D-glucosamine + diphosphate. Its pathway is nucleotide-sugar biosynthesis; UDP-N-acetyl-alpha-D-glucosamine biosynthesis; N-acetyl-alpha-D-glucosamine 1-phosphate from alpha-D-glucosamine 6-phosphate (route II): step 2/2. It participates in nucleotide-sugar biosynthesis; UDP-N-acetyl-alpha-D-glucosamine biosynthesis; UDP-N-acetyl-alpha-D-glucosamine from N-acetyl-alpha-D-glucosamine 1-phosphate: step 1/1. It functions in the pathway bacterial outer membrane biogenesis; LPS lipid A biosynthesis. In terms of biological role, catalyzes the last two sequential reactions in the de novo biosynthetic pathway for UDP-N-acetylglucosamine (UDP-GlcNAc). The C-terminal domain catalyzes the transfer of acetyl group from acetyl coenzyme A to glucosamine-1-phosphate (GlcN-1-P) to produce N-acetylglucosamine-1-phosphate (GlcNAc-1-P), which is converted into UDP-GlcNAc by the transfer of uridine 5-monophosphate (from uridine 5-triphosphate), a reaction catalyzed by the N-terminal domain. The sequence is that of Bifunctional protein GlmU from Streptococcus suis (strain 98HAH33).